Reading from the N-terminus, the 47-residue chain is Protein DVU_0533 (47 aa).

A helical transmembrane segment spans residues 18–37 (WTYILMGVTLLVYVGYWLFL).

It is found in the cell membrane. Its function is as follows. HMWC (high-molecular-weight cytochrome c), ORF2, ORF3, ORF4, ORF5 and ORF6 in the HMC operon form a transmembrane protein complex that allows electron flow from the periplasmic hydrogenase to the cytoplasmic enzymes that catalyze reduction of sulfates. In Nitratidesulfovibrio vulgaris (strain ATCC 29579 / DSM 644 / CCUG 34227 / NCIMB 8303 / VKM B-1760 / Hildenborough) (Desulfovibrio vulgaris), this protein is Protein DVU_0533.